A 147-amino-acid polypeptide reads, in one-letter code: Acidic phospholipase A2 beta-bungarotoxin A3 chain (147 aa).

Positions 1–19 (MYPAHLLVLSAVCVSLLGA) are cleaved as a signal peptide. The propeptide occupies 20–27 (ANIPPHPL). 6 disulfide bridges follow: C54–C146, C56–C72, C71–C127, C78–C120, C88–C113, and C106–C118. 3 residues coordinate Ca(2+): Y55, G57, and G59. H75 is an active-site residue. D76 lines the Ca(2+) pocket. D121 is an active-site residue.

Belongs to the phospholipase A2 family. Group I subfamily. D49 sub-subfamily. As to quaternary structure, heterodimer; disulfide-linked. The A chains have phospholipase A2 activity and the B chains show homology with the basic protease inhibitors. The A3 chain is found in beta-5 bungarotoxins. Ca(2+) is required as a cofactor. In terms of tissue distribution, expressed by the venom gland.

The protein resides in the secreted. The enzyme catalyses a 1,2-diacyl-sn-glycero-3-phosphocholine + H2O = a 1-acyl-sn-glycero-3-phosphocholine + a fatty acid + H(+). Functionally, snake venom phospholipase A2 (PLA2) that inhibits neuromuscular transmission by blocking acetylcholine release from the nerve termini. PLA2 catalyzes the calcium-dependent hydrolysis of the 2-acyl groups in 3-sn-phosphoglycerides. The sequence is that of Acidic phospholipase A2 beta-bungarotoxin A3 chain from Bungarus multicinctus (Many-banded krait).